Consider the following 853-residue polypeptide: DNA mismatch repair protein MutS (853 aa).

Gly614–Ser621 is an ATP binding site.

This sequence belongs to the DNA mismatch repair MutS family.

Functionally, this protein is involved in the repair of mismatches in DNA. It is possible that it carries out the mismatch recognition step. This protein has a weak ATPase activity. The chain is DNA mismatch repair protein MutS from Escherichia coli O157:H7 (strain EC4115 / EHEC).